The primary structure comprises 217 residues: Transmembrane emp24 domain-containing protein p24delta6 (217 aa).

Positions 1-26 are cleaved as a signal peptide; the sequence is MAISPVLFIGLIYLAGGGSLFPGVEA. Residues 27-186 are Lumenal-facing; that stretch reads IWLTVPESGE…INEKTNTRVN (160 aa). The region spanning 36–152 is the GOLD domain; it reads ERCVYEEIQA…IEGVELEIRR (117 aa). N-linked (GlcNAc...) asparagine glycans are attached at residues Asn84 and Asn116. Residues 138-160 adopt a coiled-coil conformation; sequence AKKEKIEGVELEIRRSTEYASAI. Omega-N-methylated arginine occurs at positions 170 and 175. The chain crosses the membrane as a helical span at residues 187–207; sequence QLGLMSLGVAIVVSISQVLYL. The Cytoplasmic portion of the chain corresponds to 208-217; sequence KRYFLKKKLI. Positions 210–211 match the COPII vesicle coat-binding motif; the sequence is YF. A COPI vesicle coat-binding motif is present at residues 210–217; that stretch reads YFLKKKLI.

Belongs to the EMP24/GP25L family. As to quaternary structure, probably oligomerizes with other members of the EMP24/GP25L family. Associates with the COPI vesicle coat (coatomer). Associates with the COPII vesicle coat (coatomer).

Its subcellular location is the endoplasmic reticulum membrane. Its function is as follows. Involved in vesicular protein trafficking. Mainly functions in the early secretory pathway. Thought to act as cargo receptor at the lumenal side for incorporation of secretory cargo molecules into transport vesicles and to be involved in vesicle coat formation at the cytoplasmic side. The polypeptide is Transmembrane emp24 domain-containing protein p24delta6 (Arabidopsis thaliana (Mouse-ear cress)).